A 687-amino-acid chain; its full sequence is MAGPTAPTTAPTAIRAGGPLLSPVRRNIIFTALVFGVLVAATGQTIVVPALPTIVAELGSTVDQSWAVTSYLLGGTVVVVVAGKLGDLLGRNRVLLGSVVVFVVGSVLCGLSQTMTMLAISRALQGVGAGAISVTAYALAAEVVPLRDRGRYQGVLGAVFGVNTVTGPLLGGWLTDYLSWRWAFWINVPVSIAVLTVAATAVPALARPPKPVIDYLGILVIAVATTALIMATSWGGTTYAWGSATIVGLLIGAAVALGFFVWLEGRAAAAILPPRLFGSPVFAVCCVLSFVVGFAMLGALTFVPIYLGYVDGASATASGLRTLPMVIGLLIASTGTGVLVGRTGRYKIFPVAGMALMAVAFLLMSQMDEWTPPLLQSLYLVVLGAGIGLSMQVLVLIVQNTSSFEDLGVATSGVTFFRVVGASFGTATFGALFVNFLDRRLGSALTSGAVPVPAVPSPAVLHQLPQSMAAPIVRAYAESLTQVFLCAVSVTVVGFILALLLREVPLTDIHDDADDLGDGFGVPRAESPEDVLEIAVRRMLPNGVRLRDIATQPGCGLGVAELWALLRIYQYQRLFEAVRLTDIGRHLHVPYQVFEPVFDRLVQTGYAARDGDILTLTPSGHRQVDSLAVLIRQWLLDHLAVAPGLKRQPDHQFEAALQHVTDAVLVQRDWYEDLGDLSESRQLAATT.

14 helical membrane-spanning segments follow: residues 28–48 (IIFT…TIVV), 66–86 (WAVT…GKLG), 94–114 (VLLG…LSQT), 126–146 (GVGA…VVPL), 154–174 (GVLG…GGWL), 182–202 (WAFW…ATAV), 211–231 (PVID…LIMA), 243–263 (SATI…FVWL), 287–307 (VLSF…PIYL), 320–340 (LRTL…GVLV), 348–368 (IFPV…SQMD), 378–398 (LYLV…VLIV), 414–434 (VTFF…ALFV), and 480–500 (LTQV…LALL).

It belongs to the major facilitator superfamily. TCR/Tet family.

It localises to the cell membrane. This is an uncharacterized protein from Mycobacterium tuberculosis (strain CDC 1551 / Oshkosh).